The sequence spans 296 residues: GTPase Era (296 aa).

The Era-type G domain occupies 7-173; it reads KAGFVSIIGR…VDLVREHLPE (167 aa). The G1 stretch occupies residues 15 to 22; it reads GRPNVGKS. 15–22 is a binding site for GTP; that stretch reads GRPNVGKS. A G2 region spans residues 41–45; the sequence is QTTRN. The tract at residues 62–65 is G3; that stretch reads DTPG. GTP is bound by residues 62–66 and 122–125; these read DTPGI and NKID. Residues 122 to 125 are G4; the sequence is NKID. Positions 152 to 154 are G5; that stretch reads ISA. Residues 204–281 form the KH type-2 domain; that stretch reads TNREVPYGTA…YLELFVQVQE (78 aa).

It belongs to the TRAFAC class TrmE-Era-EngA-EngB-Septin-like GTPase superfamily. Era GTPase family. Monomer.

The protein localises to the cytoplasm. Its subcellular location is the cell inner membrane. Functionally, an essential GTPase that binds both GDP and GTP, with rapid nucleotide exchange. Plays a role in 16S rRNA processing and 30S ribosomal subunit biogenesis and possibly also in cell cycle regulation and energy metabolism. This is GTPase Era from Trichlorobacter lovleyi (strain ATCC BAA-1151 / DSM 17278 / SZ) (Geobacter lovleyi).